A 555-amino-acid polypeptide reads, in one-letter code: MLFAEFAEFCERLEKISSTLELTARIAAFLQKIEDERDLYDVVLFITGKVYPPWDERELGVGIGLLYEALENVSGVKRSEIESMIREYGDLGLVAEQLIKKKKMTTLAFEELTVRKVRETFDEIASLTGEGSMKRKIMLLTGLYGLATPLEARYLTRLILNEMRLGVGEGIMRDAIARAFRADPETVERAYMITNDLGRVAVVAKKEGEEGLRKMKIEIHIPVRMMLAQVAESLESAVREMRTAAVEWKFDGSRVQVHWDGSRVTIYSRRLENVTNALPDIVEEIKKSVKPGVILDGEVIAVKEGKPMPFQHVLRRFRRKHDVAKMVEKIPLEAHFFDILYHDGECIDLPLRERRKLLESAVNESEKIKLAKQIVTDSVDEVRKMYDEAISAGHEGVMIKLPSSPYIPGKRGKNWLKVKAIMETLDLVVVGGEWGEGKRSHWLSSFELACLDPVTGKLLKVGRVATGFTEEDLEELTEMFRPLIVSQQGKKVEFIPKYVFEVAYQEIQKSPKYESGYALRFPRFVRLRDDKDVDEADTIERVENLYKLQFEVKRQ.

Glu-247 is a binding site for ATP. Lys-249 acts as the N6-AMP-lysine intermediate in catalysis. ATP is bound by residues Arg-254, Arg-269, Glu-298, Phe-337, Arg-411, and Lys-417.

The protein belongs to the ATP-dependent DNA ligase family. The cofactor is Mg(2+).

The enzyme catalyses ATP + (deoxyribonucleotide)n-3'-hydroxyl + 5'-phospho-(deoxyribonucleotide)m = (deoxyribonucleotide)n+m + AMP + diphosphate.. DNA ligase that seals nicks in double-stranded DNA during DNA replication, DNA recombination and DNA repair. This is DNA ligase from Archaeoglobus fulgidus (strain ATCC 49558 / DSM 4304 / JCM 9628 / NBRC 100126 / VC-16).